We begin with the raw amino-acid sequence, 1149 residues long: Structural maintenance of chromosomes protein 6 homolog smc-6 (1149 aa).

77-84 (GPNGSGKS) serves as a coordination point for ATP. Positions 309–460 (LQDETKKEYA…EEEKYTIQRD (152 aa)) form a coiled coil. The segment at 461–687 (INQLRRKIEQ…DVDEGALARL (227 aa)) is flexible hinge. Positions 714-920 (YNERDQTKAA…AVDRATVGCD (207 aa)) form a coiled coil. 2 disordered regions span residues 875–900 (NDKKNHPMPPGETDPPDLSSFPSTTE) and 1026–1060 (EVDEHSYDDDSDDSTGPRRKKSKKSGQKKKRVRDL). Positions 1026–1038 (EVDEHSYDDDSDD) are enriched in acidic residues. Residues 1042–1058 (PRRKKSKKSGQKKKRVR) are compositionally biased toward basic residues.

It belongs to the SMC family. SMC6 subfamily. Interacts with smc-5. Expressed in the germline (at protein level).

Its subcellular location is the nucleus. It is found in the chromosome. Functionally, core component of the smc-5/smc-6 complex. Involved in DNA double-strand break repair by promoting sister-chromatid homologous recombination during meiosis. Also plays a role in the DNA damage repair of ultraviolet (UV) radiation-induced DNA lesions. Promotes efficient DNA replication. In Caenorhabditis elegans, this protein is Structural maintenance of chromosomes protein 6 homolog smc-6.